A 323-amino-acid polypeptide reads, in one-letter code: Transcription factor MafB (323 aa).

K32 participates in a covalent cross-link: Glycyl lysine isopeptide (Lys-Gly) (interchain with G-Cter in SUMO). The span at 34-43 shows a compositional bias: basic and acidic residues; it reads EPLGRAERPG. 2 disordered regions span residues 34 to 78 and 116 to 210; these read EPLG…PTEP and PVPQ…VEDR. The span at 54-77 shows a compositional bias: low complexity; sequence SVSSTPLSTPCSSVPSSPSFSPTE. Basic residues-rich tracts occupy residues 129–143 and 159–168; these read SAHH…HPHH and AHPHHHHHHQ. The segment covering 192–201 has biased composition (low complexity); sequence PHATAAATAA. A basic motif region spans residues 238–263; the sequence is RLKQKRRTLKNRGYAQSCRYKRVQQK. One can recognise a bZIP domain in the interval 238–301; sequence RLKQKRRTLK…DAYKVKCEKL (64 aa). The segment at 266 to 287 is leucine-zipper; sequence LENEKTQLIQQVEQLKQEVSRL. K297 is covalently cross-linked (Glycyl lysine isopeptide (Lys-Gly) (interchain with G-Cter in SUMO)).

This sequence belongs to the bZIP family. Maf subfamily. In terms of assembly, homodimer or heterodimer with other bHLH-Zip transcription factors. Forms homodimers and heterodimers with FOS, FOSB and FOSL2, but not with JUN proteins (JUN, JUNB and JUND). Interacts with the intracellular cytoplasmic domain of LRP1 (LRPICD); the interaction results in a moderate reduction of MAFB transcriptional potential. Binds DNA as a homodimer or a heterodimer. Interacts with PAX6; the interaction is direct. Interacts with ETS1 and LRP1. In terms of processing, sumoylated. Sumoylation on Lys-32 and Lys-297 stimulates its transcriptional repression activity and promotes macrophage differentiation from myeloid progenitors. In terms of tissue distribution, expressed in pancreatic alpha-cells (glucagon-positive cells), in podocytes of the kidney and macrophages (at protein level). Most abundant in kidney, gut, lung and brain.

The protein localises to the nucleus. Its function is as follows. Acts as a transcriptional activator or repressor. Plays a pivotal role in regulating lineage-specific hematopoiesis by repressing ETS1-mediated transcription of erythroid-specific genes in myeloid cells. Required for monocytic, macrophage, osteoclast, podocyte and islet beta cell differentiation. Involved in renal tubule survival and F4/80 maturation. Activates the insulin and glucagon promoters. Together with PAX6, transactivates weakly the glucagon gene promoter through the G1 element. SUMO modification controls its transcriptional activity and ability to specify macrophage fate. Binds element G1 on the glucagon promoter. Involved either as an oncogene or as a tumor suppressor, depending on the cell context. Required for the transcriptional activation of HOXB3 in the rhombomere r5 in the hindbrain. The polypeptide is Transcription factor MafB (Mafb) (Mus musculus (Mouse)).